Here is a 456-residue protein sequence, read N- to C-terminus: MTTRLTRWLTALDNFEAKMALLPAVRRYGRLTRATGLVLEATGLQLPLGATCIIERQDGPETKEVESEVVGFNGQRLFLMPLEEVEGILPGARVYARNGHGDGLQSGKQLPLGPALLGRVLDGGGKPLDGLPAPDTLETGALITPPFNPLQRTPIEHVLDTGVRAINALLTVGRGQRMGLFAGSGVGKSVLLGMMARYTRADVIVVGLIGERGREVKDFIENILGPDGRARSVVIAAPADVSPLLRMQGAAYATRIAEDFRDRGQHVLLIMDSLTRYAMAQREIALAIGEPPATKGYPPSVFAKLPALVERAGNGIHGGGSITAFYTVLTEGDDQQDPIADSARAILDGHIVLSRRLAEAGHYPAIDIEASISRAMTALITEQHYARVRLFKQLLSSFQRNRDLVSVGAYAKGSDPMLDKAITLWPQLEAFLQQGIFERADWEDSLQALDLIFPTV.

182–189 (AGSGVGKS) lines the ATP pocket.

The protein belongs to the ATPase alpha/beta chains family.

It is found in the cytoplasm. It catalyses the reaction ATP + H2O + 4 H(+)(in) = ADP + phosphate + 5 H(+)(out). Functionally, probable catalytic subunit of a protein translocase for flagellum-specific export, or a proton translocase involved in local circuits at the flagellum. May be involved in a specialized protein export pathway that proceeds without signal peptide cleavage. The polypeptide is Flagellum-specific ATP synthase (fliI) (Salmonella typhimurium (strain LT2 / SGSC1412 / ATCC 700720)).